The sequence spans 78 residues: U-scoloptoxin(04)-Er1d (78 aa).

The N-terminal stretch at 1–24 is a signal peptide; that stretch reads MTRHLIFAAMLLVCLFVCWNAVGA. The propeptide occupies 25–28; that stretch reads RDAR.

This sequence belongs to the scoloptoxin-04 family. Post-translationally, contains 2 disulfide bonds. Expressed by the venom gland.

The protein localises to the secreted. This chain is U-scoloptoxin(04)-Er1d, found in Ethmostigmus rubripes (Giant centipede).